The chain runs to 358 residues: Alanine racemase (358 aa).

Lys-35 functions as the Proton acceptor; specific for D-alanine in the catalytic mechanism. Position 35 is an N6-(pyridoxal phosphate)lysine (Lys-35). Arg-130 is a substrate binding site. Tyr-255 (proton acceptor; specific for L-alanine) is an active-site residue. Substrate is bound at residue Met-303.

This sequence belongs to the alanine racemase family. Pyridoxal 5'-phosphate is required as a cofactor.

The catalysed reaction is L-alanine = D-alanine. Its pathway is amino-acid biosynthesis; D-alanine biosynthesis; D-alanine from L-alanine: step 1/1. In terms of biological role, catalyzes the interconversion of L-alanine and D-alanine. May also act on other amino acids. In Shewanella sp. (strain MR-4), this protein is Alanine racemase (alr).